Reading from the N-terminus, the 1033-residue chain is Isoleucine--tRNA ligase 2 (1033 aa).

Positions 47-57 (PTANGLPHVGH) match the 'HIGH' region motif. A 'KMSKS' region motif is present at residues 590–594 (KMSKS). Lys-593 serves as a coordination point for ATP.

It belongs to the class-I aminoacyl-tRNA synthetase family. IleS type 2 subfamily. As to quaternary structure, monomer. The cofactor is Zn(2+).

The protein resides in the cytoplasm. The enzyme catalyses tRNA(Ile) + L-isoleucine + ATP = L-isoleucyl-tRNA(Ile) + AMP + diphosphate. Catalyzes the attachment of isoleucine to tRNA(Ile). As IleRS can inadvertently accommodate and process structurally similar amino acids such as valine, to avoid such errors it has two additional distinct tRNA(Ile)-dependent editing activities. One activity is designated as 'pretransfer' editing and involves the hydrolysis of activated Val-AMP. The other activity is designated 'posttransfer' editing and involves deacylation of mischarged Val-tRNA(Ile). This Bacillus cereus (strain ATCC 14579 / DSM 31 / CCUG 7414 / JCM 2152 / NBRC 15305 / NCIMB 9373 / NCTC 2599 / NRRL B-3711) protein is Isoleucine--tRNA ligase 2.